Consider the following 360-residue polypeptide: Phospho-N-acetylmuramoyl-pentapeptide-transferase (360 aa).

Transmembrane regions (helical) follow at residues 18-38 (VFSY…FLSL), 72-92 (PTMG…MWAY), 94-114 (SNPY…VGFV), 132-152 (WKYF…YAVG), 168-188 (IMPQ…VGTS), 199-219 (GLAI…AWAT), 236-256 (AGEL…FLWF), 263-283 (VFMG…IAVL), 288-308 (FLLL…ILQV), and 338-358 (VIVR…ATLK).

Belongs to the glycosyltransferase 4 family. MraY subfamily. Mg(2+) serves as cofactor.

The protein localises to the cell inner membrane. The enzyme catalyses UDP-N-acetyl-alpha-D-muramoyl-L-alanyl-gamma-D-glutamyl-meso-2,6-diaminopimeloyl-D-alanyl-D-alanine + di-trans,octa-cis-undecaprenyl phosphate = di-trans,octa-cis-undecaprenyl diphospho-N-acetyl-alpha-D-muramoyl-L-alanyl-D-glutamyl-meso-2,6-diaminopimeloyl-D-alanyl-D-alanine + UMP. It participates in cell wall biogenesis; peptidoglycan biosynthesis. In terms of biological role, catalyzes the initial step of the lipid cycle reactions in the biosynthesis of the cell wall peptidoglycan: transfers peptidoglycan precursor phospho-MurNAc-pentapeptide from UDP-MurNAc-pentapeptide onto the lipid carrier undecaprenyl phosphate, yielding undecaprenyl-pyrophosphoryl-MurNAc-pentapeptide, known as lipid I. This Serratia proteamaculans (strain 568) protein is Phospho-N-acetylmuramoyl-pentapeptide-transferase.